The chain runs to 534 residues: C-type lectin domain family 18 member A (534 aa).

The tract at residues 47–88 is disordered; sequence GALPVAGKPEPMARSLASAPVSPWHHMDRGSTTPAKARSHSA. The SCP domain occupies 139 to 270; sequence LTAHNRLRSR…EAMEAFVCAY (132 aa). The region spanning 316-349 is the EGF-like domain; the sequence is PRNPCRMSCRNLGHLNISTCRCHCQPGYTGRYCQ. Disulfide bonds link cysteine 324–cysteine 337, cysteine 339–cysteine 348, cysteine 415–cysteine 520, and cysteine 496–cysteine 512. One can recognise a C-type lectin domain in the interval 394 to 521; that stretch reads IDGDCFMVSP…CKTRNRYICQ (128 aa).

It localises to the secreted. The sequence is that of C-type lectin domain family 18 member A (Clec18a) from Mus musculus (Mouse).